A 147-amino-acid chain; its full sequence is Prefoldin subunit alpha (147 aa).

The protein belongs to the prefoldin alpha subunit family. In terms of assembly, heterohexamer of two alpha and four beta subunits.

The protein localises to the cytoplasm. Molecular chaperone capable of stabilizing a range of proteins. Seems to fulfill an ATP-independent, HSP70-like function in archaeal de novo protein folding. The protein is Prefoldin subunit alpha of Saccharolobus islandicus (strain Y.N.15.51 / Yellowstone #2) (Sulfolobus islandicus).